The sequence spans 347 residues: Melatonin receptor type 1B-B (347 aa).

The Extracellular portion of the chain corresponds to 1–36 (MPENIAFLTNSTDLGHVGRALGSSARPAWAIAVLAS). N-linked (GlcNAc...) asparagine glycosylation occurs at Asn10. A helical transmembrane segment spans residues 37-57 (VLIFTTVVDVLGNLLVIISVF). The Cytoplasmic portion of the chain corresponds to 58 to 72 (RNRKLRNAGNVFVVS). Residues 73–93 (LAFADLVVAFYPYPLVLYAIF) traverse the membrane as a helical segment. Residues 94 to 105 (HDGWSLGETQCK) lie on the Extracellular side of the membrane. Cysteines 104 and 181 form a disulfide. A helical transmembrane segment spans residues 106-126 (ISGFLMGLSVIGSVFNITGIA). The Cytoplasmic portion of the chain corresponds to 127–148 (INRYCYICHSFAYGRLYSFRNT). Residues 149 to 169 (LLLVALIWALTVLAILPNFFV) form a helical membrane-spanning segment. The Extracellular segment spans residues 170-191 (GSLSYDPRVYSCTFTQTASSSY). The helical transmembrane segment at 192–212 (TVVVVVVHFLVPIAVVTFCYL) threads the bilayer. Residues 213 to 244 (RIWVLVIQVRRKVKSEERSRVRPSDLRNFVTM) are Cytoplasmic-facing. Residues 245 to 265 (FVVFVLFAICWAPLNLIGLVV) traverse the membrane as a helical segment. Residues 266 to 278 (AINPEVMAPRVPE) are Extracellular-facing. Residues 279–299 (WLFVVSYFMAYFNSCLNAIIY) traverse the membrane as a helical segment. Residues 300–347 (GLLNRNFRKEYVRIMTAVWIPRRFVTETSRAATDGMRSKPSPAINNNE) lie on the Cytoplasmic side of the membrane.

Belongs to the G-protein coupled receptor 1 family.

Its subcellular location is the cell membrane. High affinity receptor for melatonin. The activity of this receptor is mediated by pertussis toxin sensitive G proteins that inhibits adenylate cyclase activity. This chain is Melatonin receptor type 1B-B (mtnr1bb), found in Danio rerio (Zebrafish).